Here is a 334-residue protein sequence, read N- to C-terminus: GTP 3',8-cyclase (334 aa).

The Radical SAM core domain occupies 11–236 (GFNRKIDYLR…ESTESSMGPA (226 aa)). Position 20 (Arg20) interacts with GTP. [4Fe-4S] cluster is bound by residues Cys27 and Cys31. Residue Tyr33 coordinates S-adenosyl-L-methionine. Cys34 provides a ligand contact to [4Fe-4S] cluster. Arg69 is a binding site for GTP. Residue Gly73 participates in S-adenosyl-L-methionine binding. Thr100 serves as a coordination point for GTP. S-adenosyl-L-methionine is bound at residue Ser124. Lys161 lines the GTP pocket. An S-adenosyl-L-methionine-binding site is contributed by Met195. The [4Fe-4S] cluster site is built by Cys260 and Cys263. 265–267 (RVR) lines the GTP pocket. [4Fe-4S] cluster is bound at residue Cys277.

It belongs to the radical SAM superfamily. MoaA family. Monomer and homodimer. It depends on [4Fe-4S] cluster as a cofactor.

The catalysed reaction is GTP + AH2 + S-adenosyl-L-methionine = (8S)-3',8-cyclo-7,8-dihydroguanosine 5'-triphosphate + 5'-deoxyadenosine + L-methionine + A + H(+). It participates in cofactor biosynthesis; molybdopterin biosynthesis. Catalyzes the cyclization of GTP to (8S)-3',8-cyclo-7,8-dihydroguanosine 5'-triphosphate. The polypeptide is GTP 3',8-cyclase (Pseudomonas putida (strain ATCC 47054 / DSM 6125 / CFBP 8728 / NCIMB 11950 / KT2440)).